The following is a 125-amino-acid chain: Cu-Zn superoxide dismutase-like protein OPG175 (125 aa).

A disulfide bond links C52 and C102.

The protein belongs to the Cu-Zn superoxide dismutase family.

It localises to the virion. The protein resides in the host cytoplasm. Its function is as follows. Superoxide dismutase-like protein with no enzymatic activity. The polypeptide is Cu-Zn superoxide dismutase-like protein OPG175 (OPG175) (Vaccinia virus (strain Western Reserve) (VACV)).